Consider the following 212-residue polypeptide: Thymidylate kinase (212 aa).

An ATP-binding site is contributed by 10–17; that stretch reads GLDGAGKT.

The protein belongs to the thymidylate kinase family.

The enzyme catalyses dTMP + ATP = dTDP + ADP. In terms of biological role, phosphorylation of dTMP to form dTDP in both de novo and salvage pathways of dTTP synthesis. This Blochmanniella pennsylvanica (strain BPEN) protein is Thymidylate kinase.